Consider the following 437-residue polypeptide: (S)-6-hydroxynicotine oxidase (437 aa).

Residues serine 16, 35–37 (EAR), arginine 43, 57–60 (GGAG), valine 231, serine 405, and 413–415 (EYI) contribute to the FAD site.

It belongs to the flavin monoamine oxidase family. In terms of assembly, homodimer. The cofactor is FAD.

It carries out the reaction (S)-6-hydroxynicotine + O2 + H2O = 6-hydroxypseudooxynicotine + H2O2. The enzyme catalyses (S)-6-hydroxynicotine + O2 = 6-hydroxy-N-methylmyosmine + H2O2. The protein operates within alkaloid degradation; nicotine degradation; 6-hydroxypseudooxynicotine from nicotine (S-isomer route): step 2/2. Partially inhibited by Co(2+) or Zn(2+) and significantly inhibited by Ag(+), Cu(2+) and Hg(2+). In terms of biological role, involved in the degradation of L-nicotine. Catalyzes the oxidation of (S)-6-hydroxynicotine (6-hydroxy-L-nicotine) to 6-hydroxypseudooxynicotine. Oxidation of the pyrrolidine ring of (S)-6-hydroxynicotine leads to the formation of the optically inactive 6-hydroxy-N-methylmyosmine, which hydrolyzes spontaneously to 6-hydroxypseudooxynicotine. Acts with absolute stereospecificity on the L-form of 6-hydroxynicotine. Also involved in the degradation of nornicotine, and catalyzes the oxidation of 6-hydroxynornicotine to 6-hydroxymyosmine, which hydrolyzes to 6-hydroxypseudooxynornicotine. In vitro, converts (S)-nicotine into N-methylmyosmine, which spontaneously hydrolyzes spontaneously into pseudooxynicotine, but catalytic efficiency is about 1900-fold higher with (S)-6-hydroxynicotine. This is (S)-6-hydroxynicotine oxidase from Shinella sp. (strain HZN7).